Here is a 347-residue protein sequence, read N- to C-terminus: D-alanine--D-alanine ligase (347 aa).

The region spanning Lys133–Gln342 is the ATP-grasp domain. Glu169–Val224 contacts ATP. Mg(2+) contacts are provided by Asp296, Glu309, and Asn311.

The protein belongs to the D-alanine--D-alanine ligase family. Requires Mg(2+) as cofactor. Mn(2+) is required as a cofactor.

The protein resides in the cytoplasm. The enzyme catalyses 2 D-alanine + ATP = D-alanyl-D-alanine + ADP + phosphate + H(+). The protein operates within cell wall biogenesis; peptidoglycan biosynthesis. In terms of biological role, cell wall formation. The sequence is that of D-alanine--D-alanine ligase from Synechococcus elongatus (strain ATCC 33912 / PCC 7942 / FACHB-805) (Anacystis nidulans R2).